Here is a 197-residue protein sequence, read N- to C-terminus: GTP cyclohydrolase 1 (197 aa).

Zn(2+) contacts are provided by Cys-85, His-88, and Cys-156.

This sequence belongs to the GTP cyclohydrolase I family. Toroid-shaped homodecamer, composed of two pentamers of five dimers.

The catalysed reaction is GTP + H2O = 7,8-dihydroneopterin 3'-triphosphate + formate + H(+). Its pathway is cofactor biosynthesis; 7,8-dihydroneopterin triphosphate biosynthesis; 7,8-dihydroneopterin triphosphate from GTP: step 1/1. This Mesorhizobium japonicum (strain LMG 29417 / CECT 9101 / MAFF 303099) (Mesorhizobium loti (strain MAFF 303099)) protein is GTP cyclohydrolase 1.